Reading from the N-terminus, the 434-residue chain is MNIIVVGLSHKTAAVEIREKVAFAPTQMEKPLQAVVALPDITEAVIVSTCNRVEIYATTRDVAGGMARIKRFLADYHNVPLELLEKHLYSYHGEDATRHVFRVASSLDSMVVGEPQILGQIKTSYGYAAEYKSSGIILNRFLHKAFSVAKRVRTETKIASSAVSVAFAAVELAKKIFGELSDKTVLLIGAGEMCELAAKHFINTGVRGVMVTNRTYERAEKLAEEFDAKPVHFEALMETLPKADIILSSTGAPHFIIHEKDMEEVLRRRKHKPMFFIDIAVPRDIDPKVNNVENCYLYTVDDLNGVVATNLEQRKVEAAKAEAIVEQEIGQFFKWLSSLEVTPTIVALRTHFDEIRKAELSKTISGWKDLPPGAEKKLDALTNAIMNKLLHQPTSVLKRIDQGNRNDLYVDALRNLFDLEVGGESQDNMMELED.

Substrate is bound by residues 49-52 (TCNR), Ser109, 114-116 (EPQ), and Gln120. Cys50 functions as the Nucleophile in the catalytic mechanism. 189–194 (GAGEMC) contacts NADP(+).

It belongs to the glutamyl-tRNA reductase family. In terms of assembly, homodimer.

It carries out the reaction (S)-4-amino-5-oxopentanoate + tRNA(Glu) + NADP(+) = L-glutamyl-tRNA(Glu) + NADPH + H(+). It functions in the pathway porphyrin-containing compound metabolism; protoporphyrin-IX biosynthesis; 5-aminolevulinate from L-glutamyl-tRNA(Glu): step 1/2. In terms of biological role, catalyzes the NADPH-dependent reduction of glutamyl-tRNA(Glu) to glutamate 1-semialdehyde (GSA). This chain is Glutamyl-tRNA reductase, found in Citrifermentans bemidjiense (strain ATCC BAA-1014 / DSM 16622 / JCM 12645 / Bem) (Geobacter bemidjiensis).